Consider the following 136-residue polypeptide: DNA-directed RNA polymerase subunit omega (136 aa).

Residues 90 to 102 are compositionally biased toward low complexity; sequence SSPAAAAVAPQSS. Residues 90 to 136 form a disordered region; it reads SSPAAAAVAPQSSSDDKDVQFDRMSEEDLLRGLENLAPPTETDDEGE. The span at 103–120 shows a compositional bias: basic and acidic residues; the sequence is SDDKDVQFDRMSEEDLLR.

It belongs to the RNA polymerase subunit omega family. In terms of assembly, the RNAP catalytic core consists of 2 alpha, 1 beta, 1 beta' and 1 omega subunit. When a sigma factor is associated with the core the holoenzyme is formed, which can initiate transcription.

The enzyme catalyses RNA(n) + a ribonucleoside 5'-triphosphate = RNA(n+1) + diphosphate. Promotes RNA polymerase assembly. Latches the N- and C-terminal regions of the beta' subunit thereby facilitating its interaction with the beta and alpha subunits. This chain is DNA-directed RNA polymerase subunit omega, found in Methylorubrum populi (strain ATCC BAA-705 / NCIMB 13946 / BJ001) (Methylobacterium populi).